A 37-amino-acid polypeptide reads, in one-letter code: Large ribosomal subunit protein bL36 (37 aa).

Belongs to the bacterial ribosomal protein bL36 family.

The sequence is that of Large ribosomal subunit protein bL36 from Synechococcus sp. (strain CC9605).